The primary structure comprises 496 residues: Coiled-coil domain-containing protein 77 (496 aa).

Residues 1–42 (MDFSPPHGLRGGRSPSLQDTTISSSHTQKNGGDSTPLPPINE) form a disordered region. The span at 15–33 (PSLQDTTISSSHTQKNGGD) shows a compositional bias: polar residues. Positions 51-113 (RELLEYYRKK…KALSDMQVYL (63 aa)) form a coiled coil. Residues 170–208 (QRTVQSGDPFDRKVQRSGRAGVKQVPLKAPGKQDRTKAA) form a disordered region. Residues 214–495 (QILLLQVEAL…IYGLENELRI (282 aa)) adopt a coiled-coil conformation.

This chain is Coiled-coil domain-containing protein 77 (ccdc77), found in Xenopus laevis (African clawed frog).